Reading from the N-terminus, the 139-residue chain is uncharacterized protein (139 aa).

2 helical membrane passes run 35–55 (AYFK…AAAA) and 119–139 (CCLF…VFCV).

It localises to the membrane. This is an uncharacterized protein from Saccharomyces cerevisiae (strain ATCC 204508 / S288c) (Baker's yeast).